Here is a 264-residue protein sequence, read N- to C-terminus: Probable pectate lyase D (264 aa).

The signal sequence occupies residues Met-1–Ala-17. Asn-60 is a glycosylation site (N-linked (GlcNAc...) asparagine). A disordered region spans residues Tyr-234–Cys-264. Residues Glu-235–Gln-245 show a composition bias toward acidic residues. The segment covering Glu-246–Gln-256 has biased composition (polar residues).

Belongs to the polysaccharide lyase 3 family. It depends on Ca(2+) as a cofactor.

It localises to the secreted. The catalysed reaction is Eliminative cleavage of (1-&gt;4)-alpha-D-galacturonan to give oligosaccharides with 4-deoxy-alpha-D-galact-4-enuronosyl groups at their non-reducing ends.. Its function is as follows. Pectinolytic enzyme consist of four classes of enzymes: pectin lyase, polygalacturonase, pectin methylesterase and rhamnogalacturonase. Among pectinolytic enzymes, pectin lyase is the most important in depolymerization of pectin, since it cleaves internal glycosidic bonds of highly methylated pectins. Favors pectate, the anion, over pectin, the methyl ester. The sequence is that of Probable pectate lyase D (plyD) from Emericella nidulans (strain FGSC A4 / ATCC 38163 / CBS 112.46 / NRRL 194 / M139) (Aspergillus nidulans).